The following is an 879-amino-acid chain: Phosphoenolpyruvate carboxylase (879 aa).

Active-site residues include histidine 141 and lysine 546.

This sequence belongs to the PEPCase type 1 family. The cofactor is Mg(2+).

The enzyme catalyses oxaloacetate + phosphate = phosphoenolpyruvate + hydrogencarbonate. Functionally, forms oxaloacetate, a four-carbon dicarboxylic acid source for the tricarboxylic acid cycle. This is Phosphoenolpyruvate carboxylase from Stutzerimonas stutzeri (strain A1501) (Pseudomonas stutzeri).